The sequence spans 232 residues: TIR domain-containing adapter molecule 2 (232 aa).

Residues 1–39 are compositionally biased toward basic and acidic residues; that stretch reads MGVGKSKLDKCPLSWHKKDSVDADQDGHESDSKNSEEAC. The disordered stretch occupies residues 1 to 70; it reads MGVGKSKLDK…EAKGAGPEEQ (70 aa). Gly-2 carries N-myristoyl glycine lipidation. One can recognise a TIR domain in the interval 74-226; that stretch reads EFLKFVILHA…SIWKETRSVS (153 aa). At Tyr-164 the chain carries Phosphotyrosine.

Homodimer. Interacts with TLR4, TICAM1, IRF3 and IRF7 in response to LPS. Interacts with IL1R1, IL1RAP, IRAK2, IRAK3 and TRAF6. Interacts with protein kinase-inactive mutants of IRAK1 and IRAK4. Isoform 1 interacts with isoform 2; the interaction occurs in late endosomes and disrupts the interaction between isoform 1 and TICAM1. Interacts with MYD88; the interaction decreases after IL-18 stimulation in a time-dependent manner. Interacts with IL18R1 and IL18RAP. Interacts with TLR2. Interacts with RAB11FIP2. Post-translationally, myristoylated. Required for membrane association which is critical for its ability to initiate efficient signaling. Phosphorylated by PRKCE in response to LPS. Phosphorylation is essential for its function. It is depleted from the membrane upon phosphorylation. Tyrosine phosphorylation is inhibited by phosphatase PTPN4.

Its subcellular location is the cytoplasm. It localises to the golgi apparatus. The protein localises to the cell membrane. The protein resides in the early endosome. It is found in the late endosome. Its subcellular location is the endoplasmic reticulum. It localises to the cell projection. The protein localises to the phagocytic cup. Functionally, functions as a sorting adapter in different signaling pathways to facilitate downstream signaling leading to type I interferon induction. In TLR4 signaling, physically bridges TLR4 and TICAM1 and functionally transmits signal to TICAM1 in early endosomes after endocytosis of TLR4. In TLR2 signaling, physically bridges TLR2 and MYD88 and is required for the TLR2-dependent movement of MYD88 to endosomes following ligand engagement. Involved in IL-18 signaling and is proposed to function as a sorting adapter for MYD88 in IL-18 signaling during adaptive immune response. Forms a complex with RAB11FIP2 that is recruited to the phagosomes to promote the activation of the actin-regulatory GTPases RAC1 and CDC42 and subsequent phagocytosis of Gram-negative bacteria. The polypeptide is TIR domain-containing adapter molecule 2 (Ticam2) (Mus musculus (Mouse)).